A 272-amino-acid chain; its full sequence is Short-chain dehydrogenase/reductase iacC (272 aa).

The NADP(+) site is built by Ile13, Asp59, and Asn88. Active-site proton donor residues include Ser150 and Tyr169. Residues Tyr169, Lys173, and Val202 each coordinate NADP(+). Catalysis depends on Lys173, which acts as the Lowers pKa of active site Tyr.

The protein belongs to the short-chain dehydrogenases/reductases (SDR) family.

It functions in the pathway secondary metabolite biosynthesis. Its function is as follows. Short-chain dehydrogenase/reductase; part of the gene cluster that mediates the biosynthesis of iso-A82775C, a enylepoxycyclohexane and biosynthetic precursor of the chloropestolide anticancer natural products. Within the cluster, the prenyltransferase iacE prenylates siccayne to generate pestalodiol E, using dimethylallyl diphosphate (DMAPP) as cosubstrate. The probable oxidoreductase iacF is then involved in the epoxidation of pestalodiol F to pestalodiol F, which is further converted to pestalofone A by the short-chain dehydrogenase/reductase iacG. Iso-A82775C is subsequently generated from pestalofone A by the short-chain dehydrogenase/reductase iacC. Iso-A82775C is further condensed with maldoxin via a Diels-Alder reaction to produce the anticancer natural products chloropestolides A to E. In Pestalotiopsis fici (strain W106-1 / CGMCC3.15140), this protein is Short-chain dehydrogenase/reductase iacC.